A 695-amino-acid chain; its full sequence is Frizzled and smoothened-like protein O (695 aa).

An N-terminal signal peptide occupies residues M1–S23. The Extracellular portion of the chain corresponds to Q24–E233. Residues D28–P173 enclose the FZ domain. 5 disulfide bridges follow: C33–C96, C42–C89, C80–C125, C114–C170, and C118–C138. Residue N47 is glycosylated (N-linked (GlcNAc...) asparagine). 2 N-linked (GlcNAc...) asparagine glycosylation sites follow: N137 and N178. A helical membrane pass occupies residues A234–F254. At P255 to N262 the chain is on the cytoplasmic side. The helical transmembrane segment at W263–E283 threads the bilayer. Residues A284–T307 are Extracellular-facing. Residues C308–L328 traverse the membrane as a helical segment. At Y329–K343 the chain is on the cytoplasmic side. The chain crosses the membrane as a helical span at residues Y344–I364. Over K365 to Q387 the chain is Extracellular. Residues Y388 to T408 traverse the membrane as a helical segment. Topologically, residues S409 to S435 are cytoplasmic. The helical transmembrane segment at I436–V456 threads the bilayer. Residues T457–A500 are Extracellular-facing. A helical membrane pass occupies residues I501–L521. The Cytoplasmic segment spans residues Q522–V695. Residues S545 to D556 show a composition bias toward polar residues. A disordered region spans residues S545–V695. The span at N593–S608 shows a compositional bias: low complexity. Polar residues predominate over residues T609 to S625. The span at N626–N686 shows a compositional bias: low complexity. A coiled-coil region spans residues N653–N691.

It belongs to the G-protein coupled receptor Fz/Smo family.

The protein resides in the membrane. This is Frizzled and smoothened-like protein O (fslO) from Dictyostelium discoideum (Social amoeba).